Here is a 51-residue protein sequence, read N- to C-terminus: Large ribosomal subunit protein eL39 (51 aa).

The segment covering 1-19 (MSHNMKGQKKRLAKAHKQN) has biased composition (basic residues). Residues 1–23 (MSHNMKGQKKRLAKAHKQNSRVP) are disordered.

The protein belongs to the eukaryotic ribosomal protein eL39 family.

The sequence is that of Large ribosomal subunit protein eL39 from Methanosarcina mazei (strain ATCC BAA-159 / DSM 3647 / Goe1 / Go1 / JCM 11833 / OCM 88) (Methanosarcina frisia).